A 401-amino-acid polypeptide reads, in one-letter code: Chalcone synthase 5 (401 aa).

Cys168 is a catalytic residue.

The protein belongs to the thiolase-like superfamily. Chalcone/stilbene synthases family.

The catalysed reaction is (E)-4-coumaroyl-CoA + 3 malonyl-CoA + 3 H(+) = 2',4,4',6'-tetrahydroxychalcone + 3 CO2 + 4 CoA. It functions in the pathway secondary metabolite biosynthesis; flavonoid biosynthesis. Functionally, the primary product of this enzyme is 4,2',4',6'-tetrahydroxychalcone (also termed naringenin-chalcone or chalcone) which can under specific conditions spontaneously isomerize into naringenin. The polypeptide is Chalcone synthase 5 (CHS5) (Sorghum bicolor (Sorghum)).